A 166-amino-acid chain; its full sequence is Small ribosomal subunit protein uS5 (166 aa).

The S5 DRBM domain maps to 11–74 (LIEKLITVNR…EKARRNMVTV (64 aa)).

It belongs to the universal ribosomal protein uS5 family. In terms of assembly, part of the 30S ribosomal subunit. Contacts proteins S4 and S8.

In terms of biological role, with S4 and S12 plays an important role in translational accuracy. Its function is as follows. Located at the back of the 30S subunit body where it stabilizes the conformation of the head with respect to the body. This is Small ribosomal subunit protein uS5 from Idiomarina loihiensis (strain ATCC BAA-735 / DSM 15497 / L2-TR).